We begin with the raw amino-acid sequence, 614 residues long: Translation initiation factor IF-2 (614 aa).

The 169-residue stretch at 115–283 (ARAPIVTIMG…ILLIAELNNY (169 aa)) folds into the tr-type G domain. A G1 region spans residues 124-131 (GHVDHGKT). 124 to 131 (GHVDHGKT) contributes to the GTP binding site. The tract at residues 149-153 (GITQH) is G2. A G3 region spans residues 170 to 173 (DTPG). GTP is bound by residues 170–174 (DTPGH) and 224–227 (NKMD). Residues 224–227 (NKMD) form a G4 region. The interval 260 to 262 (SAL) is G5.

This sequence belongs to the TRAFAC class translation factor GTPase superfamily. Classic translation factor GTPase family. IF-2 subfamily.

It localises to the cytoplasm. Functionally, one of the essential components for the initiation of protein synthesis. Protects formylmethionyl-tRNA from spontaneous hydrolysis and promotes its binding to the 30S ribosomal subunits. Also involved in the hydrolysis of GTP during the formation of the 70S ribosomal complex. This chain is Translation initiation factor IF-2, found in Ureaplasma parvum serovar 3 (strain ATCC 27815 / 27 / NCTC 11736).